We begin with the raw amino-acid sequence, 339 residues long: Lipoyl synthase (339 aa).

The disordered stretch occupies residues 13–35; it reads RPKLDAPARPRHPEKAHRPDTAI. The [4Fe-4S] cluster site is built by Cys-68, Cys-73, Cys-79, Cys-94, Cys-98, Cys-101, and Ser-307. In terms of domain architecture, Radical SAM core spans 80–296; it reads WEKRHATFMI…ETTAYAKGFL (217 aa).

The protein belongs to the radical SAM superfamily. Lipoyl synthase family. [4Fe-4S] cluster serves as cofactor.

It is found in the cytoplasm. The enzyme catalyses [[Fe-S] cluster scaffold protein carrying a second [4Fe-4S](2+) cluster] + N(6)-octanoyl-L-lysyl-[protein] + 2 oxidized [2Fe-2S]-[ferredoxin] + 2 S-adenosyl-L-methionine + 4 H(+) = [[Fe-S] cluster scaffold protein] + N(6)-[(R)-dihydrolipoyl]-L-lysyl-[protein] + 4 Fe(3+) + 2 hydrogen sulfide + 2 5'-deoxyadenosine + 2 L-methionine + 2 reduced [2Fe-2S]-[ferredoxin]. The protein operates within protein modification; protein lipoylation via endogenous pathway; protein N(6)-(lipoyl)lysine from octanoyl-[acyl-carrier-protein]: step 2/2. Its function is as follows. Catalyzes the radical-mediated insertion of two sulfur atoms into the C-6 and C-8 positions of the octanoyl moiety bound to the lipoyl domains of lipoate-dependent enzymes, thereby converting the octanoylated domains into lipoylated derivatives. The chain is Lipoyl synthase from Methylorubrum extorquens (strain PA1) (Methylobacterium extorquens).